Consider the following 83-residue polypeptide: Cytochrome c oxidase subunit 12, mitochondrial (83 aa).

The CHCH domain maps to 24–67; the sequence is TKHCWQSYVDYHKCVNMKGEDFAPCKVFWKTYNALCPLDWIEKW. A Cx9C motif motif is present at residues 27–37; it reads CWQSYVDYHKC. Cystine bridges form between C27/C59 and C37/C48. A Cx10C motif motif is present at residues 48–59; it reads CKVFWKTYNALC. Phosphoserine is present on S82.

Belongs to the cytochrome c oxidase subunit 6B family. As to quaternary structure, component of the cytochrome c oxidase (complex IV, CIV), a multisubunit enzyme composed of 12 subunits. The complex is composed of a catalytic core of 3 subunits COX1, COX2 and COX3, encoded in the mitochondrial DNA, and 9 supernumerary subunits COX4, COX5A (or COX5B), COX6, COX7, COX8, COX9, COX12, COX13 and COX26, which are encoded in the nuclear genome. The complex exists as a monomer or a dimer and forms supercomplexes (SCs) in the inner mitochondrial membrane with a dimer of ubiquinol-cytochrome c oxidoreductase (cytochrome b-c1 complex, complex III, CIII), resulting in 2 different assemblies (supercomplexes III(2)IV and III(2)IV(2)).

It is found in the mitochondrion inner membrane. It participates in energy metabolism; oxidative phosphorylation. In terms of biological role, component of the cytochrome c oxidase, the last enzyme in the mitochondrial electron transport chain which drives oxidative phosphorylation. The respiratory chain contains 3 multisubunit complexes succinate dehydrogenase (complex II, CII), ubiquinol-cytochrome c oxidoreductase (cytochrome b-c1 complex, complex III, CIII) and cytochrome c oxidase (complex IV, CIV), that cooperate to transfer electrons derived from NADH and succinate to molecular oxygen, creating an electrochemical gradient over the inner membrane that drives transmembrane transport and the ATP synthase. Cytochrome c oxidase is the component of the respiratory chain that catalyzes the reduction of oxygen to water. Electrons originating from reduced cytochrome c in the intermembrane space (IMS) are transferred via the dinuclear copper A center (CU(A)) of COX2 and heme A of COX1 to the active site in COX1, a binuclear center (BNC) formed by heme A3 and copper B (CU(B)). The BNC reduces molecular oxygen to 2 water molecules unsing 4 electrons from cytochrome c in the IMS and 4 protons from the mitochondrial matrix. The polypeptide is Cytochrome c oxidase subunit 12, mitochondrial (COX12) (Saccharomyces cerevisiae (strain ATCC 204508 / S288c) (Baker's yeast)).